Reading from the N-terminus, the 103-residue chain is Large ribosomal subunit protein bL21 (103 aa).

It belongs to the bacterial ribosomal protein bL21 family. In terms of assembly, part of the 50S ribosomal subunit. Contacts protein L20.

Functionally, this protein binds to 23S rRNA in the presence of protein L20. The sequence is that of Large ribosomal subunit protein bL21 from Polaromonas sp. (strain JS666 / ATCC BAA-500).